The chain runs to 426 residues: Dihydroorotase (426 aa).

Positions 55 and 57 each coordinate Zn(2+). Residues 57 to 59 and asparagine 89 contribute to the substrate site; that span reads HLR. Zn(2+)-binding residues include aspartate 147, histidine 174, histidine 233, and aspartate 306. Residue aspartate 306 is part of the active site. Substrate-binding positions include histidine 310 and 324-325; that span reads FG.

It belongs to the metallo-dependent hydrolases superfamily. DHOase family. Class I DHOase subfamily. Zn(2+) is required as a cofactor.

The enzyme catalyses (S)-dihydroorotate + H2O = N-carbamoyl-L-aspartate + H(+). Its pathway is pyrimidine metabolism; UMP biosynthesis via de novo pathway; (S)-dihydroorotate from bicarbonate: step 3/3. In terms of biological role, catalyzes the reversible cyclization of carbamoyl aspartate to dihydroorotate. In Thermus aquaticus, this protein is Dihydroorotase.